A 140-amino-acid chain; its full sequence is RxLR effector protein Avh23 (140 aa).

The first 21 residues, 1 to 21 (MRLTYFLTVIVVATLHAGGTA), serve as a signal peptide directing secretion. The short motif at 54–72 (RMLRKVKEDTVSKKDHEER) is the RxLR-dEER element. One copy of the ADA2-binding IR1 repeat lies at 100 to 113 (QGAFQRQNAFVNRD). The ADA2-binding IR2 repeat unit spans residues 114-127 (QGAFQRQNAFVKRA).

Belongs to the RxLR effector family. Interacts with host histone acetyl transferase SAGA complex subunit ADA2.

The protein resides in the secreted. It localises to the host nucleus. It is found in the host cytoplasm. In terms of biological role, effector that suppresses plant defense responses during the early stages of pathogen infection. Suppresses cell death induced by effectors and PAMPs in plant hosts. Acts as a modulator of histone acetyltransferase (HAT) in plants. Avh23 binds to the ADA2 subunit of the HAT complex SAGA and disrupts its assembly by interfering with the association of ADA2 with the catalytic subunit GCN5. As such, Avh23 suppresses H3K9 acetylation mediated by the ADA2/GCN5 module and increases plant susceptibility. This Phytophthora sojae (Soybean stem and root rot agent) protein is RxLR effector protein Avh23.